A 494-amino-acid chain; its full sequence is Catalase A (494 aa).

Residues 1–23 (MTDRPTITTTAGAPVPDNQNSLT) are compositionally biased toward polar residues. The interval 1 to 25 (MTDRPTITTTAGAPVPDNQNSLTAG) is disordered. Residues H55 and N127 contribute to the active site. Y337 is a binding site for heme.

Belongs to the catalase family. Heme is required as a cofactor.

It is found in the periplasm. It carries out the reaction 2 H2O2 = O2 + 2 H2O. Functionally, decomposes hydrogen peroxide into water and oxygen; serves to protect cells from the toxic effects of hydrogen peroxide. The polypeptide is Catalase A (katA) (Rhizobium meliloti (strain 1021) (Ensifer meliloti)).